Reading from the N-terminus, the 419-residue chain is uncharacterized protein (419 aa).

11 consecutive transmembrane segments (helical) span residues Met1–Leu21, Val24–Asp44, Ile66–Thr86, Ala101–Ile121, Ser174–Ala194, Asn216–Leu236, Ile242–Gly262, Pro280–Leu300, Ser311–Ala331, Leu349–Phe369, and Ile396–Val416.

It belongs to the CitM (TC 2.A.11) transporter family.

The protein localises to the cell membrane. This is an uncharacterized protein from Haemophilus influenzae (strain ATCC 51907 / DSM 11121 / KW20 / Rd).